Reading from the N-terminus, the 163-residue chain is Transcription elongation factor GreB (163 aa).

A coiled-coil region spans residues 54-76 (GKRRMREIDRRIRFLTKRLEAAV).

Belongs to the GreA/GreB family. GreB subfamily.

Functionally, necessary for efficient RNA polymerase transcription elongation past template-encoded arresting sites. The arresting sites in DNA have the property of trapping a certain fraction of elongating RNA polymerases that pass through, resulting in locked ternary complexes. Cleavage of the nascent transcript by cleavage factors such as GreA or GreB allows the resumption of elongation from the new 3'terminus. GreB releases sequences of up to 9 nucleotides in length. The polypeptide is Transcription elongation factor GreB (Neisseria meningitidis serogroup A / serotype 4A (strain DSM 15465 / Z2491)).